The primary structure comprises 117 residues: MNFGLSLIFLVLVLKGVLCEVKLVESGGGLVQPGGSLKLSCAASGFTFSSYTMSWVRQTPEKRLEWVAYISNGGGSTYYPDTVKGRFTISRDNAKNNLYLQMSSLKSEDTAMYYCAR.

Positions 1–19 (MNFGLSLIFLVLVLKGVLC) are cleaved as a signal peptide. A framework-1 region spans residues 20 to 49 (EVKLVESGGGLVQPGGSLKLSCAASGFTFS). Cysteine 41 and cysteine 115 are joined by a disulfide. Residues 50 to 54 (SYTMS) are complementarity-determining-1. A framework-2 region spans residues 55–68 (WVRQTPEKRLEWVA). The complementarity-determining-2 stretch occupies residues 69–85 (YISNGGGSTYYPDTVKG). The segment at 86–117 (RFTISRDNAKNNLYLQMSSLKSEDTAMYYCAR) is framework-3.

The protein is Ig heavy chain V region 5-84 of Mus musculus (Mouse).